Here is a 311-residue protein sequence, read N- to C-terminus: Deoxyhypusine hydroxylase (311 aa).

HEAT-like PBS-type repeat units follow at residues 69–95, 102–128, 196–222, 228–254, and 261–287; these read LKHE…VLEN, VRHE…YFKN, ERYR…GLDD, FKHE…TLKD, and VRHE…FLND. 4 residues coordinate Fe cation: His-71, Glu-72, His-104, and Glu-105. Residues His-230, Glu-231, His-263, and Glu-264 each coordinate Fe cation.

This sequence belongs to the deoxyhypusine hydroxylase family. The cofactor is Fe(2+).

Its subcellular location is the cytoplasm. The protein resides in the nucleus. The catalysed reaction is [eIF5A protein]-deoxyhypusine + AH2 + O2 = [eIF5A protein]-hypusine + A + H2O. Its pathway is protein modification; eIF5A hypusination. Functionally, catalyzes the hydroxylation of the N(6)-(4-aminobutyl)-L-lysine intermediate to form hypusine, an essential post-translational modification only found in mature eIF-5A factor. This is Deoxyhypusine hydroxylase from Debaryomyces hansenii (strain ATCC 36239 / CBS 767 / BCRC 21394 / JCM 1990 / NBRC 0083 / IGC 2968) (Yeast).